The sequence spans 574 residues: Craniofacial development protein 2 (574 aa).

Basic and acidic residues-rich tracts occupy residues 1–16 (MEEV…KAED), 23–37 (ECHE…KEDE), 45–55 (EQTKGIKRKAE), 86–111 (SEKE…KEDE), and 134–172 (TGEE…DRQQ). Disordered stretches follow at residues 1–222 (MEEV…PAVD) and 488–574 (TRPF…SGVF). Polar residues predominate over residues 199–208 (KTGTNASSKN). The interval 493-572 (GTNEADDTSE…AVPSLPAGSG (80 aa)) is hydrophilic. A compositionally biased stretch (basic and acidic residues) spans 502 to 516 (EESKPSSEQKGKEKP). Residues 518–528 (ASVPSAVSSVP) show a composition bias toward low complexity.

The protein localises to the cytoplasm. It localises to the nucleus. In Tragulus javanicus (Lesser Malay chevrotain), this protein is Craniofacial development protein 2 (CFDP2).